A 252-amino-acid polypeptide reads, in one-letter code: Probable transcriptional regulatory protein A1C_04175 (252 aa).

This sequence belongs to the TACO1 family.

The protein localises to the cytoplasm. In Rickettsia akari (strain Hartford), this protein is Probable transcriptional regulatory protein A1C_04175.